Consider the following 382-residue polypeptide: Non-structural maintenance of chromosomes element 4 homolog A (382 aa).

The segment covering 1–21 has biased composition (basic and acidic residues); sequence MSGDSSGRRPEGRGRGRDPHR. The disordered stretch occupies residues 1–80; the sequence is MSGDSSGRRP…ASLEEETDPS (80 aa). Residues 31 to 41 are compositionally biased toward low complexity; the sequence is RSPLSPGSRRG. Residues 42-55 are compositionally biased toward basic and acidic residues; it reads AAPERREAPERPGL. Over residues 56–78 the composition is skewed to acidic residues; the sequence is EDTEPSDSGDEMIDPASLEEETD. The residue at position 342 (threonine 342) is a Phosphothreonine. Serine 374 is subject to Phosphoserine.

The protein belongs to the NSE4 family. As to quaternary structure, component of the SMC5-SMC6 complex which consists at least of SMC5, SMC6, NSMCE2, NSMCE1, NSMCE4A or EID3 and NSMCE3. NSMCE1, NSMCE4A or EID3 and NSMCE3 probably form a subcomplex that bridges the head domains of the SMC5:SMC6 heterodimer. Interacts with NSMCE3.

The protein resides in the nucleus. The protein localises to the chromosome. It localises to the telomere. Its function is as follows. Component of the SMC5-SMC6 complex, a complex involved in repair of DNA double-strand breaks by homologous recombination. The complex may promote sister chromatid homologous recombination by recruiting the SMC1-SMC3 cohesin complex to double-strand breaks. The complex is required for telomere maintenance via recombination and mediates sumoylation of shelterin complex (telosome) components. This chain is Non-structural maintenance of chromosomes element 4 homolog A (NSMCE4A), found in Bos taurus (Bovine).